Reading from the N-terminus, the 164-residue chain is MTRTSDKAPTQRQLRVGEEIRHALAEVFERGTVRDPAVAGVALTVTEVRISPDLRNATVFLVRLGGGPLDEVLTGLRKARAFLRREVAIRIHTKFVPDLRFESDPSFDYAEYINGLLHRPEVARDLGVPPSGEDDGDDEADDEDDDGGEEGPGAAAPPPADEGR.

Residues A123 to R164 form a disordered region. Over residues G132–E149 the composition is skewed to acidic residues. The segment covering A155 to R164 has biased composition (pro residues).

This sequence belongs to the RbfA family. Monomer. Binds 30S ribosomal subunits, but not 50S ribosomal subunits or 70S ribosomes.

Its subcellular location is the cytoplasm. One of several proteins that assist in the late maturation steps of the functional core of the 30S ribosomal subunit. Associates with free 30S ribosomal subunits (but not with 30S subunits that are part of 70S ribosomes or polysomes). Required for efficient processing of 16S rRNA. May interact with the 5'-terminal helix region of 16S rRNA. This chain is Ribosome-binding factor A, found in Rhodospirillum rubrum (strain ATCC 11170 / ATH 1.1.1 / DSM 467 / LMG 4362 / NCIMB 8255 / S1).